The sequence spans 161 residues: Regulator of ribonuclease activity A (161 aa).

The protein belongs to the RraA family. Homotrimer. Binds to both RNA-binding sites in the C-terminal region of Rne and to RhlB.

Its subcellular location is the cytoplasm. Functionally, globally modulates RNA abundance by binding to RNase E (Rne) and regulating its endonucleolytic activity. Can modulate Rne action in a substrate-dependent manner by altering the composition of the degradosome. Modulates RNA-binding and helicase activities of the degradosome. This Enterobacter sp. (strain 638) protein is Regulator of ribonuclease activity A.